A 484-amino-acid polypeptide reads, in one-letter code: Poly(A) RNA polymerase GLD2 (484 aa).

Serine 62 and serine 69 each carry phosphoserine. A Nuclear localization signal motif is present at residues 76–92 (KRLSDEKNLPLDGKRQR). The residue at position 95 (serine 95) is a Phosphoserine. Mg(2+) is bound by residues aspartate 213 and aspartate 215. The PAP-associated domain maps to 386–440 (NLGDLLLGFLKYYATEFDWNSQMISVREAKAIPRPDGIEWRNKYICVEEPFDGTN).

This sequence belongs to the DNA polymerase type-B-like family. GLD2 subfamily. As to quaternary structure, interacts with CPEB1, CPEB2, CPSF1 and PABPC1. Interacts with QKI isoform QKI7; promoting recruitment to miRNA miR-122 and miR-122 stabilization. It depends on Mg(2+) as a cofactor. Requires Mn(2+) as cofactor.

It localises to the cytoplasm. The protein localises to the nucleus. The enzyme catalyses RNA(n) + ATP = RNA(n)-3'-adenine ribonucleotide + diphosphate. Functionally, cytoplasmic poly(A) RNA polymerase that adds successive AMP monomers to the 3'-end of specific RNAs, forming a poly(A) tail. In contrast to the canonical nuclear poly(A) RNA polymerase, it only adds poly(A) to selected cytoplasmic mRNAs. Does not play a role in replication-dependent histone mRNA degradation. Adds a single nucleotide to the 3' end of specific miRNAs, monoadenylation stabilizes and prolongs the activity of some but not all miRNAs. The polypeptide is Poly(A) RNA polymerase GLD2 (Bos taurus (Bovine)).